Reading from the N-terminus, the 287-residue chain is Ret finger protein-like 4A (287 aa).

The RING-type; degenerate zinc finger occupies 11–53; that stretch reads CYFCFRCLESPVYLNCGYICCLKCLDSLEKSPEGDGVLCPTCS. A B30.2/SPRY domain is found at 78–278; the sequence is EPQLNFILTM…LSICPVTNPG (201 aa).

As to quaternary structure, interacts with PSMB1, UBE2A and CCNB1. In terms of tissue distribution, expressed in the ovaries and oocytes (at protein level). Expression restricted to gonads. In testis, present at later stages of spermatogeneis and abundant in elongating spermatids.

Its subcellular location is the cytoplasm. The protein localises to the nucleus. This is Ret finger protein-like 4A (Rfpl4a) from Mus musculus (Mouse).